The primary structure comprises 179 residues: MYKFLVFSSVLVLFFAQASCQRFIQPTFRPPPTQRPITRTVRQAGQEPLWLYQGDNVPRAPSTADHPILPSKIDDVQLDPNRRYVRSVTNPENNEASIEHSHHTVDIGLDQPIESHRNTRDLRFLYPRGKLPVPTLPPFNPKPIYIDMGNRYRRHASEDQEELRQYNEHFLIPRDIFQE.

A signal peptide spans 1–16; it reads MYKFLVFSSVLVLFFA. The propeptide occupies 17-120; that stretch reads QASCQRFIQP…QPIESHRNTR (104 aa). T135 carries an O-linked (GalNAc...) threonine glycan. Positions 153–179 are excised as a propeptide; the sequence is RRHASEDQEELRQYNEHFLIPRDIFQE.

The protein belongs to the lebocin family. O-glycosylation is important for the antibacterial activity of lebocin. In terms of tissue distribution, hemolymph. Produced in fat body.

It is found in the secreted. Antibacterial peptide. This is Lebocin-3 (LEB3) from Bombyx mori (Silk moth).